We begin with the raw amino-acid sequence, 543 residues long: Kelch repeat and BTB domain-containing protein 4 (543 aa).

In terms of domain architecture, BTB spans 70 to 137 (ADVTISVEGR…IYHGTVKLRA (68 aa)). Residues 172–264 (CLQVMWLADR…SLKEIGENVH (93 aa)) form the BACK domain. Kelch repeat units follow at residues 264 to 310 (HIYL…KHGG), 311 to 353 (DLYV…SVPG), 356 to 403 (AIYS…NLNG), 405 to 455 (IYLL…VHKD), and 457 to 505 (VFIV…YVFR).

Component of the BCR(KBTBD4) E3 ubiquitin ligase complex, at least composed of CUL3, KBTBD4 and RBX1.

Substrate-specific adapter of a BCR (BTB-CUL3-RBX1) E3 ubiquitin ligase complex which targets CoREST corepressor complex components RCOR1, KDM1A/LSD1 and HDAC2 for proteasomal degradation. RCOR1 is likely to be the primary target while degradation of KDM1A and HDAC2 is likely due to their association with RCOR1. Also targets RCOR3, MIER2 and MIER3 for proteasomal degradation as well as associated proteins ZNF217 and RREB1. Degradation is dependent on the presence of an ELM2 domain in the target proteins. The polypeptide is Kelch repeat and BTB domain-containing protein 4 (KBTBD4) (Macaca fascicularis (Crab-eating macaque)).